Here is a 658-residue protein sequence, read N- to C-terminus: Threonine--tRNA ligase (658 aa).

The TGS domain maps to 1-61; that stretch reads MSDVRVIIQR…KDGETVEAVE (61 aa). Residues 259–554 are catalytic; it reads DHRKLGSELD…LLEHYAGAMP (296 aa). Zn(2+) is bound by residues Cys353, His404, and His531.

This sequence belongs to the class-II aminoacyl-tRNA synthetase family. As to quaternary structure, homodimer. Requires Zn(2+) as cofactor.

Its subcellular location is the cytoplasm. It catalyses the reaction tRNA(Thr) + L-threonine + ATP = L-threonyl-tRNA(Thr) + AMP + diphosphate + H(+). Catalyzes the attachment of threonine to tRNA(Thr) in a two-step reaction: L-threonine is first activated by ATP to form Thr-AMP and then transferred to the acceptor end of tRNA(Thr). Also edits incorrectly charged L-seryl-tRNA(Thr). This Streptomyces coelicolor (strain ATCC BAA-471 / A3(2) / M145) protein is Threonine--tRNA ligase.